Reading from the N-terminus, the 262-residue chain is Type II restriction enzyme HinfI (262 aa).

It catalyses the reaction Endonucleolytic cleavage of DNA to give specific double-stranded fragments with terminal 5'-phosphates.. A P subtype restriction enzyme that recognizes the double-stranded sequence 5'-GANTC-3' and cleaves after G-1. The protein is Type II restriction enzyme HinfI (hinfIR) of Haemophilus influenzae.